Reading from the N-terminus, the 419-residue chain is Histidine--tRNA ligase (419 aa).

It belongs to the class-II aminoacyl-tRNA synthetase family.

It is found in the cytoplasm. It catalyses the reaction tRNA(His) + L-histidine + ATP = L-histidyl-tRNA(His) + AMP + diphosphate + H(+). The chain is Histidine--tRNA ligase from Pyrobaculum aerophilum (strain ATCC 51768 / DSM 7523 / JCM 9630 / CIP 104966 / NBRC 100827 / IM2).